Reading from the N-terminus, the 142-residue chain is Large ribosomal subunit protein uL13 (142 aa).

This sequence belongs to the universal ribosomal protein uL13 family. In terms of assembly, part of the 50S ribosomal subunit.

This protein is one of the early assembly proteins of the 50S ribosomal subunit, although it is not seen to bind rRNA by itself. It is important during the early stages of 50S assembly. The protein is Large ribosomal subunit protein uL13 of Koribacter versatilis (strain Ellin345).